The following is a 144-amino-acid chain: UPF0292 protein MA_4098 (144 aa).

The Toprim domain maps to 28–109; it reads GAVIIVEGKR…KPELQIRNKL (82 aa). Mg(2+) is bound by residues Glu34, Asp78, and Asp80.

Belongs to the UPF0292 family. The cofactor is Mg(2+).

In Methanosarcina acetivorans (strain ATCC 35395 / DSM 2834 / JCM 12185 / C2A), this protein is UPF0292 protein MA_4098.